The chain runs to 340 residues: Peroxisomal coenzyme A diphosphatase 1, peroxisomal (340 aa).

A peroxisome-targeting transit peptide spans 1-7; it reads MILSQRR. The 163-residue stretch at 37-199 folds into the Nudix hydrolase domain; that stretch reads KRNSAVIILL…DEDVKSYQAE (163 aa). A Nudix box motif is present at residues 77-99; sequence GKADYFQETFESVARREAEEEIG. Residues E93 and E97 each contribute to the Mg(2+) site.

Belongs to the Nudix hydrolase family. PCD1 subfamily. Mn(2+) serves as cofactor. Requires Mg(2+) as cofactor. Post-translationally, the size of the cleaved transit peptide can be of 7 or 8 residues.

It localises to the peroxisome. It catalyses the reaction CoA + H2O = (R)-4'-phosphopantetheine + adenosine 3',5'-bisphosphate + 2 H(+). The catalysed reaction is CoA-disulfide + H2O = 4'-phosphopantetheinyl-CoA disulfide + adenosine 3',5'-bisphosphate + 2 H(+). The enzyme catalyses 8-oxo-dGTP + H2O = 8-oxo-dGMP + diphosphate + H(+). It carries out the reaction 2-oxo-dATP + H2O = 2-oxo-dAMP + diphosphate + H(+). Diphosphatase (pyrophosphatase) with specificity for coenzyme A and CoA derivatives. Catalyzes the hydrolysis of the diphosphate linkage in CoA to give 3',5'-ADP and 4'-phosphopantetheine. Prefers oxidized CoA disulfide (CoASSCoA) over CoA as a substrate. May be required to remove potentially toxic oxidized CoA disulfide from peroxisomes to maintain the capacity for beta-oxidation of fatty acids. Can also hydrolyze 8-oxo-dGTP and 2-OH-dATP in vitro; therefore it may function as a sanitizing enzyme for oxidized nucleotides and may contribute to prevention of spontaneous mutagenesis due to the misincorporation of these oxidized nucleotides during DNA synthesis. Shows moderate activity in vitro with several short chain acyl-CoA esters and very low activity on 3'-dephospho-CoA while is not active with (deoxy)nucleoside 5'-triphosphates, nucleoside 5'-di- or monophosphates, diadenosine polyphosphates, nucleoside 5'-diphosphosugars, cytidine 5'-diphosphoalcohols, NAD(+), NADH, or FAD. The polypeptide is Peroxisomal coenzyme A diphosphatase 1, peroxisomal (PCD1) (Saccharomyces cerevisiae (strain ATCC 204508 / S288c) (Baker's yeast)).